We begin with the raw amino-acid sequence, 99 residues long: UPF0213 protein PC1_0597 (99 aa).

Residues 8–83 (PQWYLYILRT…KQLSKNQKER (76 aa)) enclose the GIY-YIG domain.

This sequence belongs to the UPF0213 family.

The protein is UPF0213 protein PC1_0597 of Pectobacterium carotovorum subsp. carotovorum (strain PC1).